A 624-amino-acid chain; its full sequence is tRNA uridine 5-carboxymethylaminomethyl modification enzyme MnmG (624 aa).

FAD is bound by residues 13-18, Val-125, and Ser-180; that span reads GAGHAG. 272–286 contacts NAD(+); that stretch reads GPRYCPSIEDKVVKF. An FAD-binding site is contributed by Gln-369.

This sequence belongs to the MnmG family. Homodimer. Heterotetramer of two MnmE and two MnmG subunits. Requires FAD as cofactor.

The protein localises to the cytoplasm. In terms of biological role, NAD-binding protein involved in the addition of a carboxymethylaminomethyl (cmnm) group at the wobble position (U34) of certain tRNAs, forming tRNA-cmnm(5)s(2)U34. The protein is tRNA uridine 5-carboxymethylaminomethyl modification enzyme MnmG of Thermodesulfovibrio yellowstonii (strain ATCC 51303 / DSM 11347 / YP87).